The chain runs to 123 residues: Ribonuclease P protein component 2 (123 aa).

This sequence belongs to the eukaryotic/archaeal RNase P protein component 2 family. Consists of a catalytic RNA component and at least 4 protein subunits.

The catalysed reaction is Endonucleolytic cleavage of RNA, removing 5'-extranucleotides from tRNA precursor.. Part of ribonuclease P, a protein complex that generates mature tRNA molecules by cleaving their 5'-ends. The sequence is that of Ribonuclease P protein component 2 from Aeropyrum pernix (strain ATCC 700893 / DSM 11879 / JCM 9820 / NBRC 100138 / K1).